The primary structure comprises 235 residues: Caffeoyl-CoA O-methyltransferase (235 aa).

K8 lines the substrate pocket. S-adenosyl-L-methionine is bound by residues V52, E74, 76–77 (GV), S82, D100, and A129. Substrate is bound at residue D151. Residue D151 coordinates a divalent metal cation. D153 contributes to the S-adenosyl-L-methionine binding site. A divalent metal cation-binding residues include D177 and N178.

The protein belongs to the class I-like SAM-binding methyltransferase superfamily. Cation-dependent O-methyltransferase family. CCoAMT subfamily. A divalent metal cation is required as a cofactor.

The catalysed reaction is (E)-caffeoyl-CoA + S-adenosyl-L-methionine = (E)-feruloyl-CoA + S-adenosyl-L-homocysteine + H(+). It functions in the pathway aromatic compound metabolism; phenylpropanoid biosynthesis. Its function is as follows. Methylates caffeoyl-CoA to feruloyl-CoA and 5-hydroxyferuloyl-CoA to sinapoyl-CoA. Plays a role in the synthesis of feruloylated polysaccharides. Involved in the reinforcement of the plant cell wall. Also involved in the responding to wounding or pathogen challenge by the increased formation of cell wall-bound ferulic acid polymers. This Populus kitakamiensis (Aspen) protein is Caffeoyl-CoA O-methyltransferase.